A 254-amino-acid chain; its full sequence is Dihydroorotate dehydrogenase B (NAD(+)), electron transfer subunit (254 aa).

In terms of domain architecture, FAD-binding FR-type spans 1-99; that stretch reads MLQTEMKVIQ…LGPLGKGFDL (99 aa). Residues 50 to 53, 67 to 69, and 74 to 75 contribute to the FAD site; these read RPIS, LYR, and GT. 4 residues coordinate [2Fe-2S] cluster: Cys-218, Cys-223, Cys-226, and Cys-241.

This sequence belongs to the PyrK family. As to quaternary structure, heterotetramer of 2 PyrK and 2 PyrD type B subunits. [2Fe-2S] cluster serves as cofactor. Requires FAD as cofactor.

It functions in the pathway pyrimidine metabolism; UMP biosynthesis via de novo pathway; orotate from (S)-dihydroorotate (NAD(+) route): step 1/1. Its function is as follows. Responsible for channeling the electrons from the oxidation of dihydroorotate from the FMN redox center in the PyrD type B subunit to the ultimate electron acceptor NAD(+). The protein is Dihydroorotate dehydrogenase B (NAD(+)), electron transfer subunit of Listeria innocua serovar 6a (strain ATCC BAA-680 / CLIP 11262).